We begin with the raw amino-acid sequence, 242 residues long: ATP synthase subunit a (242 aa).

Helical transmembrane passes span Leu21 to Cys41, Ala83 to Val103, Ala118 to Ile137, Leu175 to Glu195, and Ala198 to Val218.

It belongs to the ATPase A chain family. F-type ATPases have 2 components, CF(1) - the catalytic core - and CF(0) - the membrane proton channel. CF(1) has five subunits: alpha(3), beta(3), gamma(1), delta(1), epsilon(1). CF(0) has three main subunits: a(1), b(2) and c(9-12). The alpha and beta chains form an alternating ring which encloses part of the gamma chain. CF(1) is attached to CF(0) by a central stalk formed by the gamma and epsilon chains, while a peripheral stalk is formed by the delta and b chains.

Its subcellular location is the cell membrane. Key component of the proton channel; it plays a direct role in the translocation of protons across the membrane. The polypeptide is ATP synthase subunit a (Staphylococcus epidermidis (strain ATCC 35984 / DSM 28319 / BCRC 17069 / CCUG 31568 / BM 3577 / RP62A)).